The chain runs to 527 residues: 4-alpha-glucanotransferase (527 aa).

This sequence belongs to the disproportionating enzyme family.

Its subcellular location is the cytoplasm. It catalyses the reaction Transfers a segment of a (1-&gt;4)-alpha-D-glucan to a new position in an acceptor, which may be glucose or a (1-&gt;4)-alpha-D-glucan.. This chain is 4-alpha-glucanotransferase (malQ), found in Chlamydia trachomatis serovar D (strain ATCC VR-885 / DSM 19411 / UW-3/Cx).